The primary structure comprises 506 residues: UPF0522 protein A (506 aa).

The N-terminal stretch at Met1–Ser18 is a signal peptide. 6 N-linked (GlcNAc...) asparagine glycosylation sites follow: Asn145, Asn155, Asn330, Asn366, Asn418, and Asn427.

Belongs to the UPF0522 family.

Its subcellular location is the secreted. The sequence is that of UPF0522 protein A from Dictyostelium discoideum (Social amoeba).